The following is a 718-amino-acid chain: Tensin-4 (718 aa).

Residues 1–14 (MSSSLLTGGHVVSL) form the signal peptide. Disordered stretches follow at residues 188-244 (RETR…GLRA) and 272-437 (LPHS…AKDM). The span at 192–207 (SSSNESLIFSGNQGRG) shows a compositional bias: polar residues. A compositionally biased stretch (low complexity) spans 208–219 (SSPHTPSSLSNS). Phosphoserine is present on Ser230. The span at 272–304 (LPHSSLSSYPPSSRSLGSPASSSSSLHSLDRGS) shows a compositional bias: low complexity. Composition is skewed to polar residues over residues 306–316 (CVRSSDAQVPS), 337–349 (QASS…TNSM), 367–393 (PAQQ…QATK), and 405–415 (TSPSHLCQATK). The SH2 domain maps to 451–558 (WFKPSITREQ…ALPCKLTIPQ (108 aa)). In terms of domain architecture, PTB spans 585-711 (CHTLYLTSVS…SQVISLVTAL (127 aa)).

This sequence belongs to the PTEN phosphatase protein family. As to quaternary structure, interacts (via SH2 domain) with Rho GTPase-activating protein DLC1 (via C-terminus); the interaction is independent of DLC1 tyrosine phosphorylation. Interacts with integrin ITGB1; the interaction displaces tensin TNS3 from the ITGB1 cytoplasmic tail and promotes ITGB1 stability. Interacts (via SH2 domain) with E3 ubiquitin-protein ligase CBL (phosphorylated on 'Tyr-781'); the interaction is enhanced in the presence of EGF and reduces interaction of CBL with EGFR. Interacts (via SH2 domain) with receptor tyrosine kinase MET (when phosphorylated); the interaction increases MET protein stability.

It localises to the cell junction. The protein resides in the focal adhesion. It is found in the cytoplasm. The protein localises to the cytoskeleton. In terms of biological role, promotes EGF-induced cell migration by displacing tensin TNS3 from the cytoplasmic tail of integrin ITGB1 which results in dissociation of TNS3 from focal adhesions, disassembly of actin stress fibers and initiation of cell migration. Suppresses ligand-induced degradation of EGFR by reducing EGFR ubiquitination in the presence of EGF. Increases MET protein stability by inhibiting MET endocytosis and subsequent lysosomal degradation which leads to increased cell survival, proliferation and migration. The chain is Tensin-4 (Tns4) from Rattus norvegicus (Rat).